The following is a 112-amino-acid chain: Histone H2A, sperm (112 aa).

Gln91 is subject to N5-methylglutamine. Lys106 participates in a covalent cross-link: Glycyl lysine isopeptide (Lys-Gly) (interchain with G-Cter in ubiquitin).

It belongs to the histone H2A family. The nucleosome is a histone octamer containing two molecules each of H2A, H2B, H3 and H4 assembled in one H3-H4 heterotetramer and two H2A-H2B heterodimers. The octamer wraps approximately 147 bp of DNA. Monoubiquitination gives a specific tag for epigenetic transcriptional repression.

It localises to the nucleus. Its subcellular location is the chromosome. Functionally, core component of nucleosome. Nucleosomes wrap and compact DNA into chromatin, limiting DNA accessibility to the cellular machineries which require DNA as a template. Histones thereby play a central role in transcription regulation, DNA repair, DNA replication and chromosomal stability. DNA accessibility is regulated via a complex set of post-translational modifications of histones, also called histone code, and nucleosome remodeling. This chain is Histone H2A, sperm, found in Lytechinus pictus (Painted sea urchin).